The following is a 286-amino-acid chain: Putative quercetin 2,3-dioxygenase PA2418 (286 aa).

4 residues coordinate a divalent metal cation: His61, His63, His105, and Glu107.

It belongs to the pirin family. It depends on a divalent metal cation as a cofactor.

It carries out the reaction quercetin + O2 = 2-(3,4-dihydroxybenzoyloxy)-4,6-dihydroxybenzoate + CO. Its pathway is flavonoid metabolism; quercetin degradation. Its function is as follows. Putative quercetin 2,3-dioxygenase. This Pseudomonas aeruginosa (strain ATCC 15692 / DSM 22644 / CIP 104116 / JCM 14847 / LMG 12228 / 1C / PRS 101 / PAO1) protein is Putative quercetin 2,3-dioxygenase PA2418.